Here is a 33-residue protein sequence, read N- to C-terminus: LGPDIVSPPVCGNELLEVGEECDCGTPENCQNE.

Residues 8–33 (PPVCGNELLEVGEECDCGTPENCQNE) form the Disintegrin domain. Ca(2+)-binding residues include valine 10, asparagine 13, leucine 15, glutamate 17, glutamate 20, and aspartate 23. 2 disulfide bridges follow: cysteine 11–cysteine 30 and cysteine 24–cysteine 30.

Belongs to the venom metalloproteinase (M12B) family. P-III subfamily. P-IIIb sub-subfamily. Monomer. Zn(2+) serves as cofactor. In terms of processing, the N-terminus (from the N-terminal region of the metalloproteinase domain) is blocked. As to expression, expressed by the venom gland.

It localises to the secreted. Its activity is regulated as follows. The fibrinogenolytic and coagulant activities of the moojenin were abolished by preincubation with EDTA, 1,10-phenanthroline and beta-mercaptoethanol. Metalloproteinase moojenin: snake venom metalloproteinase that cleaves both alpha- and beta-chains of fibrinogen, but not the gamma-chain. Shows a coagulant activity on bovine plasma about 3.1 fold lower than crude venom. Renders the blood incoagulable when intraperitoneally administered into mice. Induces necrosis in liver and muscle, but does not cause histological alterations in mouse lungs, kidney or heart. The polypeptide is Zinc metalloproteinase-disintegrin-like moojenin (Bothrops moojeni (Lance-headed viper)).